The sequence spans 479 residues: MRSIVLPSLALALFSQRARADTTLTIDPTSNWGTWEGWGVSLAWWAKAFGNRDDLASVFFSRNNQAVNGQTLPGLGFNIVRYNAGACSNNSYDGSTMVVSPNIKPSRQMDGFWLDWASSDPSSSSWNWNVDANQRAMLQKAKANGANIFELFSNSPMWWMCNNHNPSGSGSSDNLQSWNYQNHAVYLADIAQHAQQSWRIQFQSVEAFNEPSSSWWTAEGTQEGCHFDVSTMATVIGYLNTELSSRGLSSFVASSDENTYDLAISTWQGFNSSTRNIVKRINVHGYQDGGGRRDTLYSLASQAGKRLWNSEYGDSDASGKSMYQNLLLDFTWLHPTAWVYWQAIDGAGWGLIVGDNDNLTLSSASTKYFVLAQLTRHIRQGMQILTTPDVNTAVAYDAGSQKLVIVTANWGSAQTITFDLTRARTAGSNGATVPRWSTQTGGGDQYRSYTDTKINNGKFSASFSSGQVQTFEVSGVVLQ.

Residues 1–20 (MRSIVLPSLALALFSQRARA) form the signal peptide. Residue asparagine 89 is glycosylated (N-linked (GlcNAc...) asparagine). Glutamate 210 acts as the Proton donor in catalysis. Residue asparagine 271 is glycosylated (N-linked (GlcNAc...) asparagine). The Nucleophile role is filled by glutamate 311. Asparagine 358 carries N-linked (GlcNAc...) asparagine glycosylation.

It catalyses the reaction Endohydrolysis of (1-&gt;6)-beta-D-galactosidic linkages in arabinogalactan proteins and (1-&gt;3):(1-&gt;6)-beta-galactans to yield galactose and beta-(1-&gt;6)-galactaobiose as the final products.. Functionally, hydrolyzes galactooligomers with a degree of polymerization higher than 3. Hydrolyzes radish root arabinogalactan-protein. Does not hydrolyze dextran, arabinan, starch, laminarin, beta-1,4- and beta-1,3-galactans, larch wood arabinogalactan or acid-insoluble polygalacturonic acid. The sequence is that of Endo-beta-1,6-galactanase from Hypocrea rufa (Trichoderma viride).